We begin with the raw amino-acid sequence, 165 residues long: Austinoid biosynthesis cluster protein J (165 aa).

It belongs to the trt14 isomerase family. Homodimer.

It participates in secondary metabolite biosynthesis; terpenoid biosynthesis. Part of the gene cluster that mediates the biosynthesis of calidodehydroaustin, a fungal meroterpenoid. The first step of the pathway is the synthesis of 3,5-dimethylorsellinic acid by the polyketide synthase ausA. 3,5-dimethylorsellinic acid is then prenylated by the polyprenyl transferase ausN. Further epoxidation by the FAD-dependent monooxygenase ausM and cyclization by the probable terpene cyclase ausL lead to the formation of protoaustinoid A. Protoaustinoid A is then oxidized to spiro-lactone preaustinoid A3 by the combined action of the FAD-binding monooxygenases ausB and ausC, and the dioxygenase ausE. Acid-catalyzed keto-rearrangement and ring contraction of the tetraketide portion of preaustinoid A3 by ausJ lead to the formation of preaustinoid A4. The aldo-keto reductase ausK, with the help of ausH, is involved in the next step by transforming preaustinoid A4 into isoaustinone which is in turn hydroxylated by the P450 monooxygenase ausI to form austinolide. The cytochrome P450 monooxygenase ausG modifies austinolide to austinol. Austinol is further acetylated to austin by the O-acetyltransferase ausP, which spontaneously changes to dehydroaustin. The cytochrome P450 monooxygenase ausR then converts dehydroaustin is into 7-dehydrodehydroaustin. The hydroxylation catalyzed by ausR permits the O-acetyltransferase ausQ to add an additional acetyl group to the molecule, leading to the formation of acetoxydehydroaustin. The short chain dehydrogenase ausT catalyzes the reduction of the double bond present between carbon atoms 1 and 2 to convert 7-dehydrodehydroaustin into 1,2-dihydro-7-hydroxydehydroaustin. AusQ catalyzes not only an acetylation reaction but also the addition of the PKS ausV diketide product to 1,2-dihydro-7-hydroxydehydroaustin, forming precalidodehydroaustin. Finally, the iron/alpha-ketoglutarate-dependent dioxygenase converts precalidodehydroaustin into calidodehydroaustin. The sequence is that of Austinoid biosynthesis cluster protein J from Aspergillus calidoustus.